The sequence spans 223 residues: Deoxyribose-phosphate aldolase (223 aa).

Asp-91 (proton donor/acceptor) is an active-site residue. Lys-153 (schiff-base intermediate with acetaldehyde) is an active-site residue. Catalysis depends on Lys-182, which acts as the Proton donor/acceptor.

The protein belongs to the DeoC/FbaB aldolase family. DeoC type 1 subfamily.

Its subcellular location is the cytoplasm. It catalyses the reaction 2-deoxy-D-ribose 5-phosphate = D-glyceraldehyde 3-phosphate + acetaldehyde. Its pathway is carbohydrate degradation; 2-deoxy-D-ribose 1-phosphate degradation; D-glyceraldehyde 3-phosphate and acetaldehyde from 2-deoxy-alpha-D-ribose 1-phosphate: step 2/2. Its function is as follows. Catalyzes a reversible aldol reaction between acetaldehyde and D-glyceraldehyde 3-phosphate to generate 2-deoxy-D-ribose 5-phosphate. This Yersinia pestis bv. Antiqua (strain Angola) protein is Deoxyribose-phosphate aldolase.